Reading from the N-terminus, the 361-residue chain is Zinc transporter ZIP13 (361 aa).

The Lumenal segment spans residues 1–6 (MPGCPC). The chain crosses the membrane as a helical span at residues 7-27 (PGCGMAGQRLLFLTVLALELL). The Cytoplasmic portion of the chain corresponds to 28–68 (ERAGGSQPALRSLGAAAACRLDSKESESWGALLSGERLDTW). Residues 69–89 (ICSLLGSLMVGLSGVFPLLVI) traverse the membrane as a helical segment. The Lumenal portion of the chain corresponds to 90-108 (PLEMGTMLQSEAGAWRLKQ). A helical transmembrane segment spans residues 109-129 (LLSFALGGLLGNVFLHLLPEA). Residues 130-150 (WAYTCNISPGVEGQSLQRQQQ) are Cytoplasmic-facing. A helical transmembrane segment spans residues 151–171 (LGLWVIAGFLTFLALEKMFLN). The Lumenal portion of the chain corresponds to 172–233 (CKEEDPSQAP…TIDNFTHGLA (62 aa)). The chain crosses the membrane as a helical span at residues 234–254 (VAASFLVSKKIGLLTTMAILL). The XEXPHE-motif signature appears at 255-260 (HEIPHE). Topologically, residues 255–276 (HEIPHEVGDFAILLRAGFDRWT) are cytoplasmic. Residues 277-297 (AAKLQFSTALGGLLGACFAIC) traverse the membrane as a helical segment. Over 298 to 307 (TQSPKGVEET) the chain is Lumenal. A helical transmembrane segment spans residues 308 to 328 (VVWTLPFTSGGFLYVALVNVL). The Cytoplasmic portion of the chain corresponds to 329 to 340 (PDLLEEDDPWHL). Residues 341-361 (NPPLPTGTPCSRCCCSAPVSW) form a helical membrane-spanning segment.

It belongs to the ZIP transporter (TC 2.A.5) family. In terms of assembly, homodimer.

The protein localises to the golgi apparatus membrane. It localises to the cytoplasmic vesicle membrane. The protein resides in the endoplasmic reticulum membrane. The catalysed reaction is Zn(2+)(in) = Zn(2+)(out). Its function is as follows. Functions as a zinc transporter transporting Zn(2+) from the Golgi apparatus to the cytosol and thus influences the zinc level at least in areas of the cytosol. May regulate beige adipocyte differentiation. The polypeptide is Zinc transporter ZIP13 (Rattus norvegicus (Rat)).